Here is a 570-residue protein sequence, read N- to C-terminus: Ribosome-inactivating protein SNAIf (570 aa).

The signal sequence occupies residues 1 to 28 (MRVVTKLLYLVVLAICGLGIHGALTHTR). N-linked (GlcNAc...) asparagine glycans are attached at residues Asn40, Asn62, and Asn140. Glu199 is a catalytic residue. Asn232 carries an N-linked (GlcNAc...) asparagine glycan. 3 cysteine pairs are disulfide-bonded: Cys284/Cys316, Cys332/Cys351, and Cys373/Cys385. 2 consecutive Ricin B-type lectin domains span residues 319 to 439 (VEVT…WTVG) and 441 to 566 (VEPL…WITT). A 1-alpha repeat occupies 329 to 369 (DGLCVDVRDGHYIDGNTVQLGPCGNECNQLWTFRTDGTIRW). The stretch at 370–405 (LGKCLTTSSSVMIYDCNTVPPEATKWVVSTDGTITN) is one 1-beta repeat. The 1-gamma repeat unit spans residues 408–440 (SGLVLTAPQAAEGTALSLENNIHAARQGWTVGD). One copy of the 2-alpha repeat lies at 452–489 (KQMCLTENGENNFVWLEDCVLNRVEQEWALYGDGTIRV). A disulfide bond links Cys455 and Cys470. Asn492 carries N-linked (GlcNAc...) asparagine glycosylation. One copy of the 2-beta repeat lies at 493-531 (RSLCVTSEDHEPSDLIVILKCEGSGNQRWVFNTNGTISN). The cysteines at positions 496 and 513 are disulfide-linked. N-linked (GlcNAc...) asparagine glycans are attached at residues Asn526 and Asn544. The 2-gamma repeat unit spans residues 534–567 (AKLVMDVAQSNVSLRKIILYPPTGNPNQQWITTT).

The protein belongs to the ribosome-inactivating protein family. Type 2 RIP subfamily. As to quaternary structure, tetramer of four pairs of disulfide bound A-B chains. In terms of processing, the precursor is processed in two chains, A and B, that are linked by a disulfide bond. A small truncated form corresponding roughly to the second ricin B-type lectin domain of the B chain, TrSNAIf, can also be produced. Post-translationally, N-glycosylated. In terms of tissue distribution, expressed in fruits.

The enzyme catalyses Endohydrolysis of the N-glycosidic bond at one specific adenosine on the 28S rRNA.. In terms of biological role, neu5Ac(alpha2-6)Gal/GalNAc specific agglutinin. Behaves as a type-2 ribosome-inactivating protein. Strongly inhibits mammalian but not plant ribosomes. The A chain is responsible for inhibiting protein synthesis through the catalytic inactivation of 60S ribosomal subunits by removing adenine from position 4,324 of 28S rRNA. The B chain binds to cell receptors and probably facilitates the entry into the cell of the A chain; B chains are also responsible for cell agglutination (lectin activity). Involved in plant defense against insects. Binds Neu5Ac(alpha2-6)Gal/GalNAc but has no clear agglutination activity. The chain is Ribosome-inactivating protein SNAIf from Sambucus nigra (European elder).